Here is a 206-residue protein sequence, read N- to C-terminus: Ribosomal RNA small subunit methyltransferase G (206 aa).

Residues glycine 73, leucine 78, 124–125 (VE), and arginine 139 contribute to the S-adenosyl-L-methionine site.

This sequence belongs to the methyltransferase superfamily. RNA methyltransferase RsmG family.

It localises to the cytoplasm. It carries out the reaction guanosine(527) in 16S rRNA + S-adenosyl-L-methionine = N(7)-methylguanosine(527) in 16S rRNA + S-adenosyl-L-homocysteine. Specifically methylates the N7 position of guanine in position 527 of 16S rRNA. The sequence is that of Ribosomal RNA small subunit methyltransferase G from Edwardsiella ictaluri (strain 93-146).